We begin with the raw amino-acid sequence, 255 residues long: Thrombin-like enzyme batroxobin (255 aa).

An N-terminal signal peptide occupies residues 1 to 18 (MVLIRVIANLLILQVSYA). The propeptide occupies 19 to 24 (QKSSEL). One can recognise a Peptidase S1 domain in the interval 25–247 (VIGGDECDIN…YLPWIQSIIA (223 aa)). Intrachain disulfides connect C31–C163, C50–C66, C98–C254, C142–C208, C174–C187, and C198–C223. Catalysis depends on charge relay system residues H65 and D110. An N-linked (GlcNAc...) asparagine glycan is attached at N170. The active-site Charge relay system is the S202. N-linked (GlcNAc...) asparagine glycosylation occurs at N249.

It belongs to the peptidase S1 family. Snake venom subfamily. As to quaternary structure, monomer. Expressed by the venom gland.

It is found in the secreted. It carries out the reaction Selective cleavage of Arg-|-Xaa bond in fibrinogen, to form fibrin, and release fibrinopeptide A. The specificity of further degradation of fibrinogen varies with species origin of the enzyme.. Functionally, thrombin-like snake venom serine protease. Cleaves Arg-Gly bonds in fibrinogen alpha chains (FGA). In Bothrops atrox (Barba amarilla), this protein is Thrombin-like enzyme batroxobin.